The primary structure comprises 152 residues: MYSILIACLVLLLCLVIYVGHRADHARKYLEGMWHGDPVFLKQSGLQSFYLYIQPGHTCFFSIVNKNGEKLMETKIPCTITNKIYMFFKPIFEFHVVMEDIHRYLPKQFNFLLDSAEGKLILENNHVIYAVLYKDNFATALGKTVEKYITQN.

The signal sequence occupies residues 1–23 (MYSILIACLVLLLCLVIYVGHRA).

Belongs to the asfivirus EP152R family.

It localises to the virion. This is an uncharacterized protein from Ornithodoros (relapsing fever ticks).